A 599-amino-acid polypeptide reads, in one-letter code: Elongation factor 4 (599 aa).

One can recognise a tr-type G domain in the interval 5-187 (SHIRNFSIIA…RLVHTIPAPV (183 aa)). Residues 17–22 (DHGKST) and 134–137 (NKMD) contribute to the GTP site.

This sequence belongs to the TRAFAC class translation factor GTPase superfamily. Classic translation factor GTPase family. LepA subfamily.

It is found in the cell inner membrane. The enzyme catalyses GTP + H2O = GDP + phosphate + H(+). Required for accurate and efficient protein synthesis under certain stress conditions. May act as a fidelity factor of the translation reaction, by catalyzing a one-codon backward translocation of tRNAs on improperly translocated ribosomes. Back-translocation proceeds from a post-translocation (POST) complex to a pre-translocation (PRE) complex, thus giving elongation factor G a second chance to translocate the tRNAs correctly. Binds to ribosomes in a GTP-dependent manner. The sequence is that of Elongation factor 4 from Pseudomonas putida (strain W619).